A 161-amino-acid polypeptide reads, in one-letter code: Large ribosomal subunit protein uL30m (161 aa).

The N-terminal 34 residues, M1–H34, are a transit peptide targeting the mitochondrion.

The protein belongs to the universal ribosomal protein uL30 family. As to quaternary structure, component of the mitochondrial large ribosomal subunit (mt-LSU). Mature mammalian 55S mitochondrial ribosomes consist of a small (28S) and a large (39S) subunit. The 28S small subunit contains a 12S ribosomal RNA (12S mt-rRNA) and 30 different proteins. The 39S large subunit contains a 16S rRNA (16S mt-rRNA), a copy of mitochondrial valine transfer RNA (mt-tRNA(Val)), which plays an integral structural role, and 52 different proteins.

The protein localises to the mitochondrion. In Homo sapiens (Human), this protein is Large ribosomal subunit protein uL30m (MRPL30).